We begin with the raw amino-acid sequence, 88 residues long: MDFFTWVIITAGFGMAFGSLGTAIGQGLAVKSALEGVARNPGASGKILTTMMIGLAMVESLAIYVFVVSMIILFANPFKDVVLELVAG.

Helical transmembrane passes span 4-24 and 53-73; these read FTWV…GTAI and IGLA…MIIL.

It belongs to the ATPase C chain family. F-type ATPases have 2 components, F(1) - the catalytic core - and F(0) - the membrane proton channel. F(1) has five subunits: alpha(3), beta(3), gamma(1), delta(1), epsilon(1). F(0) has three main subunits: a(1), b(2) and c(10-14). The alpha and beta chains form an alternating ring which encloses part of the gamma chain. F(1) is attached to F(0) by a central stalk formed by the gamma and epsilon chains, while a peripheral stalk is formed by the delta and b chains.

It localises to the cell inner membrane. F(1)F(0) ATP synthase produces ATP from ADP in the presence of a proton or sodium gradient. F-type ATPases consist of two structural domains, F(1) containing the extramembraneous catalytic core and F(0) containing the membrane proton channel, linked together by a central stalk and a peripheral stalk. During catalysis, ATP synthesis in the catalytic domain of F(1) is coupled via a rotary mechanism of the central stalk subunits to proton translocation. Its function is as follows. Key component of the F(0) channel; it plays a direct role in translocation across the membrane. A homomeric c-ring of between 10-14 subunits forms the central stalk rotor element with the F(1) delta and epsilon subunits. The polypeptide is ATP synthase subunit c 1 (Syntrophotalea carbinolica (strain DSM 2380 / NBRC 103641 / GraBd1) (Pelobacter carbinolicus)).